Here is a 784-residue protein sequence, read N- to C-terminus: Cation/H(+) antiporter 26 (784 aa).

The next 11 helical transmembrane spans lie at 38-58 (PLLLLLISLVSSLSSVFQALL), 61-81 (LANVDFVTQILAGIFLGPSAL), 97-117 (YFIIESFEAISFMFISYISTA), 130-150 (LAIINGLSLFLFPYVVGAIAC), 201-221 (LALSSIMVANCFGWGFFLLLI), 240-260 (FTKVLLLVGIVVVCRPIFNWI), 286-306 (TFLSETVGFPYVVGSVALGLV), 321-341 (IGSFCYAVLMPCYVIGIGNKV), 351-371 (IISLEFLIFTISAAKFASIVL), 376-396 (FQVPISHAVIVGFIVCIQGIY), and 413-433 (EAFGIMVISAMVHSTIFTAIV).

It belongs to the monovalent cation:proton antiporter 2 (CPA2) transporter (TC 2.A.37) family. CHX (TC 2.A.37.4) subfamily. Expressed in pollen.

Its subcellular location is the membrane. Its function is as follows. May operate as a cation/H(+) antiporter. The protein is Cation/H(+) antiporter 26 (CHX26) of Arabidopsis thaliana (Mouse-ear cress).